A 70-amino-acid chain; its full sequence is uncharacterized protein (70 aa).

2 helical membrane passes run 13-33 (YYAF…LLGF) and 39-59 (QTYA…GLII).

It is found in the cell membrane. This is an uncharacterized protein from Escherichia coli O6:H1 (strain CFT073 / ATCC 700928 / UPEC).